We begin with the raw amino-acid sequence, 238 residues long: ATP synthase subunit a (238 aa).

5 helical membrane passes run 15 to 35, 76 to 96, 111 to 131, 167 to 187, and 208 to 230; these read IFNL…FVFI, YSLF…LGLM, PTAN…LTHI, LALR…LLLL, and AFSV…VYLG.

It belongs to the ATPase A chain family. In terms of assembly, F-type ATPases have 2 components, CF(1) - the catalytic core - and CF(0) - the membrane proton channel. CF(1) has five subunits: alpha(3), beta(3), gamma(1), delta(1), epsilon(1). CF(0) has three main subunits: a(1), b(2) and c(9-12). The alpha and beta chains form an alternating ring which encloses part of the gamma chain. CF(1) is attached to CF(0) by a central stalk formed by the gamma and epsilon chains, while a peripheral stalk is formed by the delta and b chains.

It localises to the cell membrane. Key component of the proton channel; it plays a direct role in the translocation of protons across the membrane. In Streptococcus pneumoniae (strain 70585), this protein is ATP synthase subunit a.